Consider the following 511-residue polypeptide: MMLEGEFHTHMLPEFMIERRQDRCIRCRVCERQCGFNVHWYDEEMDMMREDEMKCVGCQRCAVMCPTNALVVKPHPGNYKPNANWTRERLQDLKKQAETGGVLLTGSGNDKPYRIYWDHIVLNASQVTNPSIDPLREPMELRTFLGRKQDRLEFKYSEDFEDIEITTELYPNVQIETPIVFSAMSYGAISYQAFKSLAMAASEFGTLFNTGEGGLPKELRKYGKNAIVQCASGRFGVDPEYLNVAAVVEIKIGQGAKPGIGGHLPGEKVTLPISVTRMIPEGTDALSPAPQHDIYSIEDLSMLIYALKEATNYEKPVSVKIAAVHNVAAIASGMVRAGADIIAIDGLRGGTGAAPKMIRDNVGIPVELALAAVDQRLRDEGIRNKASILVAGGFRCSADVVKAIALGADAVYIGTPALVAMGCTLCQKCHTGICNWGICTQDPYLAKRLNPEITAKRLVNLLRAWSHEIKEMLGGMGINAIESLRGNREQLRGVGLEDWELEVLGIKGAGE.

4Fe-4S ferredoxin-type domains lie at 15 to 44 (FMIE…YDEE) and 46 to 75 (DMMR…VKPH). C24, C27, C30, C34, C55, C58, C61, and C65 together coordinate [4Fe-4S] cluster.

The protein belongs to the glutamate synthase family. It depends on FMN as a cofactor.

The catalysed reaction is 2 L-glutamate + NADP(+) = L-glutamine + 2-oxoglutarate + NADPH + H(+). In Archaeoglobus fulgidus (strain ATCC 49558 / DSM 4304 / JCM 9628 / NBRC 100126 / VC-16), this protein is Archaeal glutamate synthase [NADPH].